The following is an 894-amino-acid chain: Phosphoenolpyruvate carboxylase (894 aa).

Catalysis depends on residues His-143 and Lys-556.

It belongs to the PEPCase type 1 family. Mg(2+) serves as cofactor.

The catalysed reaction is oxaloacetate + phosphate = phosphoenolpyruvate + hydrogencarbonate. In terms of biological role, forms oxaloacetate, a four-carbon dicarboxylic acid source for the tricarboxylic acid cycle. This Acinetobacter baylyi (strain ATCC 33305 / BD413 / ADP1) protein is Phosphoenolpyruvate carboxylase.